The following is a 181-amino-acid chain: ATP synthase subunit b (181 aa).

Residues 16–36 (LIPPIPELVIGLIAFVIVFGF) form a helical membrane-spanning segment.

This sequence belongs to the ATPase B chain family. F-type ATPases have 2 components, F(1) - the catalytic core - and F(0) - the membrane proton channel. F(1) has five subunits: alpha(3), beta(3), gamma(1), delta(1), epsilon(1). F(0) has three main subunits: a(1), b(2) and c(10-14). The alpha and beta chains form an alternating ring which encloses part of the gamma chain. F(1) is attached to F(0) by a central stalk formed by the gamma and epsilon chains, while a peripheral stalk is formed by the delta and b chains.

It localises to the cell membrane. Functionally, f(1)F(0) ATP synthase produces ATP from ADP in the presence of a proton or sodium gradient. F-type ATPases consist of two structural domains, F(1) containing the extramembraneous catalytic core and F(0) containing the membrane proton channel, linked together by a central stalk and a peripheral stalk. During catalysis, ATP synthesis in the catalytic domain of F(1) is coupled via a rotary mechanism of the central stalk subunits to proton translocation. Component of the F(0) channel, it forms part of the peripheral stalk, linking F(1) to F(0). The polypeptide is ATP synthase subunit b (Streptomyces lividans).